The sequence spans 316 residues: Homoserine O-succinyltransferase (316 aa).

Cys142 serves as the catalytic Acyl-thioester intermediate. Substrate contacts are provided by Lys163 and Ser192. Catalysis depends on His235, which acts as the Proton acceptor. Glu237 is an active-site residue. Arg249 is a binding site for substrate.

The protein belongs to the MetA family.

It is found in the cytoplasm. It catalyses the reaction L-homoserine + succinyl-CoA = O-succinyl-L-homoserine + CoA. It functions in the pathway amino-acid biosynthesis; L-methionine biosynthesis via de novo pathway; O-succinyl-L-homoserine from L-homoserine: step 1/1. Functionally, transfers a succinyl group from succinyl-CoA to L-homoserine, forming succinyl-L-homoserine. The chain is Homoserine O-succinyltransferase from Shewanella amazonensis (strain ATCC BAA-1098 / SB2B).